Here is a 163-residue protein sequence, read N- to C-terminus: MRKQVAIFTDGSCLGNPGPGGYGAILRYKQHEKTFSAGYRLTTNNRMELMAAIVALEALTDACEVVLSTDSQYVRQGITQWIHNWKKRGWKTAYKKPVKNVDLWQRLDAAIQPHTLRWDWVKGHSGHPENERCDELARTAACHPALEDIGYRVEAQTSGGRAD.

One can recognise an RNase H type-1 domain in the interval 1 to 142; it reads MRKQVAIFTD…CDELARTAAC (142 aa). Mg(2+) is bound by residues Asp-10, Glu-48, Asp-70, and Asp-134.

Belongs to the RNase H family. As to quaternary structure, monomer. The cofactor is Mg(2+).

It is found in the cytoplasm. It catalyses the reaction Endonucleolytic cleavage to 5'-phosphomonoester.. Endonuclease that specifically degrades the RNA of RNA-DNA hybrids. The chain is Ribonuclease H from Sodalis glossinidius (strain morsitans).